Reading from the N-terminus, the 158-residue chain is MQSLRAAFRRRTPIFLKPYEFSTNVFGLRCRYYSQVRHNGALTDLEYHRVADDTLDVLNDTFEDLLEEVGKKDYDIQYANGVITLMLGEKGTYVINKQPPAHQIWLSSPVSGPKHYEYSLKSKTWCSTRDEGTLLGILSSEFSKWFSRPIEFKKSEDF.

It belongs to the frataxin family. Monomer. Oligomer.

The protein localises to the mitochondrion. The enzyme catalyses 4 Fe(2+) + O2 + 4 H(+) = 4 Fe(3+) + 2 H2O. Its function is as follows. Promotes the biosynthesis of heme as well as the assembly and repair of iron-sulfur clusters by delivering Fe(2+) to proteins involved in these pathways. May play a role in the protection against iron-catalyzed oxidative stress through its ability to catalyze the oxidation of Fe(2+) to Fe(3+). May be able to store large amounts of the metal in the form of a ferrihydrite mineral by oligomerization. This is Frataxin homolog, mitochondrial from Schizosaccharomyces pombe (strain 972 / ATCC 24843) (Fission yeast).